Reading from the N-terminus, the 231-residue chain is 2-C-methyl-D-erythritol 4-phosphate cytidylyltransferase (231 aa).

It belongs to the IspD/TarI cytidylyltransferase family. IspD subfamily.

The enzyme catalyses 2-C-methyl-D-erythritol 4-phosphate + CTP + H(+) = 4-CDP-2-C-methyl-D-erythritol + diphosphate. The protein operates within isoprenoid biosynthesis; isopentenyl diphosphate biosynthesis via DXP pathway; isopentenyl diphosphate from 1-deoxy-D-xylulose 5-phosphate: step 2/6. Catalyzes the formation of 4-diphosphocytidyl-2-C-methyl-D-erythritol from CTP and 2-C-methyl-D-erythritol 4-phosphate (MEP). The polypeptide is 2-C-methyl-D-erythritol 4-phosphate cytidylyltransferase (Dictyoglomus thermophilum (strain ATCC 35947 / DSM 3960 / H-6-12)).